The chain runs to 335 residues: Vitamin B12 import system permease protein BtuC (335 aa).

9 helical membrane passes run 22 to 42, 67 to 87, 94 to 114, 117 to 137, 153 to 173, 200 to 220, 243 to 263, 281 to 301, and 308 to 328; these read LLLL…AGDV, LAVM…QSLF, PGLL…VLLG, LLPV…MTFL, LLVG…AVYF, LVLA…ALNF, VLAI…IGFV, YLLP…DVVA, and AELP…IWLL.

Belongs to the binding-protein-dependent transport system permease family. FecCD subfamily. In terms of assembly, the complex is composed of two ATP-binding proteins (BtuD), two transmembrane proteins (BtuC) and a solute-binding protein (BtuF).

The protein resides in the cell inner membrane. Its function is as follows. Part of the ABC transporter complex BtuCDF involved in vitamin B12 import. Involved in the translocation of the substrate across the membrane. The chain is Vitamin B12 import system permease protein BtuC from Serratia proteamaculans (strain 568).